We begin with the raw amino-acid sequence, 331 residues long: Ribosomal RNA small subunit methyltransferase H (331 aa).

S-adenosyl-L-methionine contacts are provided by residues 38–40, aspartate 56, phenylalanine 83, aspartate 100, and glutamine 107; that span reads GGY. A disordered region spans residues 308–331; it reads TDAPAGPVDPQVLGMPLIPKKGRR.

The protein belongs to the methyltransferase superfamily. RsmH family.

Its subcellular location is the cytoplasm. It carries out the reaction cytidine(1402) in 16S rRNA + S-adenosyl-L-methionine = N(4)-methylcytidine(1402) in 16S rRNA + S-adenosyl-L-homocysteine + H(+). Its function is as follows. Specifically methylates the N4 position of cytidine in position 1402 (C1402) of 16S rRNA. This chain is Ribosomal RNA small subunit methyltransferase H, found in Cereibacter sphaeroides (strain ATCC 17025 / ATH 2.4.3) (Rhodobacter sphaeroides).